The following is a 103-amino-acid chain: Large ribosomal subunit protein bL21 (103 aa).

This sequence belongs to the bacterial ribosomal protein bL21 family. As to quaternary structure, part of the 50S ribosomal subunit. Contacts protein L20.

This protein binds to 23S rRNA in the presence of protein L20. The polypeptide is Large ribosomal subunit protein bL21 (Aromatoleum aromaticum (strain DSM 19018 / LMG 30748 / EbN1) (Azoarcus sp. (strain EbN1))).